A 256-amino-acid polypeptide reads, in one-letter code: ATP synthase peripheral stalk subunit b, mitochondrial (256 aa).

The N-terminal 42 residues, Met-1–Ala-42, are a transit peptide targeting the mitochondrion. Lys-131 bears the N6-succinyllysine mark. Lys-139, Lys-154, Lys-162, Lys-221, Lys-233, and Lys-244 each carry N6-acetyllysine.

It belongs to the eukaryotic ATPase B chain family. Component of the ATP synthase complex composed at least of ATP5F1A/subunit alpha, ATP5F1B/subunit beta, ATP5MC1/subunit c (homooctomer), MT-ATP6/subunit a, MT-ATP8/subunit 8, ATP5ME/subunit e, ATP5MF/subunit f, ATP5MG/subunit g, ATP5MK/subunit k, ATP5MJ/subunit j, ATP5F1C/subunit gamma, ATP5F1D/subunit delta, ATP5F1E/subunit epsilon, ATP5PF/subunit F6, ATP5PB/subunit b, ATP5PD/subunit d, ATP5PO/subunit OSCP. ATP synthase complex consists of a soluble F(1) head domain (subunits alpha(3) and beta(3)) - the catalytic core - and a membrane F(0) domain - the membrane proton channel (subunits c, a, 8, e, f, g, k and j). These two domains are linked by a central stalk (subunits gamma, delta, and epsilon) rotating inside the F1 region and a stationary peripheral stalk (subunits F6, b, d, and OSCP).

Its subcellular location is the mitochondrion. The protein resides in the mitochondrion inner membrane. Its function is as follows. Subunit b, of the mitochondrial membrane ATP synthase complex (F(1)F(0) ATP synthase or Complex V) that produces ATP from ADP in the presence of a proton gradient across the membrane which is generated by electron transport complexes of the respiratory chain. ATP synthase complex consist of a soluble F(1) head domain - the catalytic core - and a membrane F(1) domain - the membrane proton channel. These two domains are linked by a central stalk rotating inside the F(1) region and a stationary peripheral stalk. During catalysis, ATP synthesis in the catalytic domain of F(1) is coupled via a rotary mechanism of the central stalk subunits to proton translocation. In vivo, can only synthesize ATP although its ATP hydrolase activity can be activated artificially in vitro. Part of the complex F(0) domain. Part of the complex F(0) domain and the peripheric stalk, which acts as a stator to hold the catalytic alpha(3)beta(3) subcomplex and subunit a/ATP6 static relative to the rotary elements. The chain is ATP synthase peripheral stalk subunit b, mitochondrial from Pongo abelii (Sumatran orangutan).